The sequence spans 354 residues: MRHSLTKLLAASGSNSPTRSESPEPAATCSLPSDLTRAAAGEEETAAAGSPGRKQQFGDEGELEAGRGSRGGVAVRAPSPEEMEEEAIASLPGEETEDMDFLSGLELADLLDPRQPDWHLDPGLSSPGPLSSSGGGSDSGGLWRGDDDDEAAAAEMQRFSDLLQRLLNGIGGCSSSSDSGSAEKRRRKSPGGGGGGGSGNDNNQAATKSPRKAAAAAARLNRLKKKEYVMGLESRVRGLAAENQELRAENRELGKRVQALQEESRYLRAVLANETGLARLLSRLSGVGLRLTTSLFRDSPAGDHDYALPVGKQKQDLLEEDDSAGGVCLHVDKDKVSVEFCSACARKASSSLKM.

Disordered stretches follow at residues 1–95, 113–156, and 171–214; these read MRHS…PGEE, PRQP…AAEM, and GGCS…RKAA. S50 bears the Phosphoserine mark. A compositionally biased stretch (low complexity) spans 121-132; it reads DPGLSSPGPLSS. 2 stretches are compositionally biased toward gly residues: residues 133 to 143 and 190 to 199; these read SGGGSDSGGLW and PGGGGGGGSG. The bZIP domain maps to 204 to 267; sequence QAATKSPRKA…QALQEESRYL (64 aa). Positions 205–214 are enriched in low complexity; that stretch reads AATKSPRKAA. The basic motif stretch occupies residues 219-226; sequence RLNRLKKK. Residues 232-267 are leucine-zipper; that stretch reads LESRVRGLAAENQELRAENRELGKRVQALQEESRYL. The HCFC1-binding motif (HBM) motif lies at 303 to 306; that stretch reads DHDY.

It belongs to the bZIP family. ATF subfamily. Interacts with HCFC1; the interaction inhibits CREB3 transcriptional activity. Interacts with CREB3; the interaction occurs only in combination with HCFC1. As to expression, in adults, expressed most abundantly in heart, liver and skeletal muscle, moderately abundant in kidney and pancreas, and barely detectable in lung. In fetal tissues, expressed most abundantly in kidney and very low amounts in heart, lung and liver.

It is found in the nucleus. Functionally, strongly activates transcription when bound to HCFC1. Suppresses the expression of HSV proteins in cells infected with the virus in a HCFC1-dependent manner. Also suppresses the HCFC1-dependent transcriptional activation by CREB3 and reduces the amount of CREB3 in the cell. Able to down-regulate expression of some cellular genes in CREBZF-expressing cells. This chain is CREB/ATF bZIP transcription factor (CREBZF), found in Homo sapiens (Human).